The sequence spans 156 residues: Endoribonuclease YbeY (156 aa).

Zn(2+) is bound by residues H105, H109, and D115.

Belongs to the endoribonuclease YbeY family. Requires Zn(2+) as cofactor.

The protein localises to the cytoplasm. Its function is as follows. Single strand-specific metallo-endoribonuclease involved in late-stage 70S ribosome quality control and in maturation of the 3' terminus of the 16S rRNA. This is Endoribonuclease YbeY from Chlorobium chlorochromatii (strain CaD3).